A 290-amino-acid polypeptide reads, in one-letter code: 30 kDa spicule matrix protein alpha (290 aa).

A signal peptide spans 1-20; sequence MRGFVYVLVCVLALASFSRA. Positions 92-162 constitute a C-type lectin domain; sequence ANMYCGQMHP…YTNWERMTAP (71 aa). N-linked (GlcNAc...) asparagine glycosylation occurs at Asn-102.

In terms of tissue distribution, accumulates exclusively in mineralized tissues.

In terms of biological role, matrix protein of the sea urchin embryo spicule. The function of the matrix proteins is to direct crystal growth in certain orientations and inhibit growth in others. This Strongylocentrotus purpuratus (Purple sea urchin) protein is 30 kDa spicule matrix protein alpha (SM30A).